The primary structure comprises 204 residues: Large ribosomal subunit protein uL4 (204 aa).

The tract at residues 49–75 is disordered; sequence TKGRSDVSGGGKKPWRQKGRGGARAGS.

Belongs to the universal ribosomal protein uL4 family. As to quaternary structure, part of the 50S ribosomal subunit.

Functionally, one of the primary rRNA binding proteins, this protein initially binds near the 5'-end of the 23S rRNA. It is important during the early stages of 50S assembly. It makes multiple contacts with different domains of the 23S rRNA in the assembled 50S subunit and ribosome. Its function is as follows. Forms part of the polypeptide exit tunnel. The polypeptide is Large ribosomal subunit protein uL4 (Campylobacter lari (strain RM2100 / D67 / ATCC BAA-1060)).